We begin with the raw amino-acid sequence, 84 residues long: Beta-defensin 119 (84 aa).

The first 21 residues, 1–21 (MKLLYLFLAILLVIEEPVISG), serve as a signal peptide directing secretion. Disulfide bonds link Cys28-Cys55, Cys35-Cys49, and Cys39-Cys56.

This sequence belongs to the beta-defensin family.

Its subcellular location is the secreted. Functionally, has antibacterial activity. This is Beta-defensin 119 (DEFB119) from Pongo pygmaeus (Bornean orangutan).